We begin with the raw amino-acid sequence, 864 residues long: N-alpha-acetyltransferase 16, NatA auxiliary subunit (864 aa).

TPR repeat units lie at residues 46–79 (GETL…DVRS), 80–113 (HVCW…DKDN), 148–184 (RASW…PPNK), 224–257 (LLVE…NAEN), 374–407 (IWVQ…TPTL), 408–441 (IELF…DTAD), and 485–514 (MWFE…VERH). The interval 594–646 (KMLSKQRRAQKKAKVEEERKHTERERQQKNQKKKREEEEEVTSGHKEELIPEK) is disordered. Basic residues predominate over residues 595 to 605 (MLSKQRRAQKK). Basic and acidic residues-rich tracts occupy residues 606–621 (AKVE…ERQQ) and 635–646 (TSGHKEELIPEK).

Component of the N-terminal acetyltransferase A (NatA) complex composed of NAA10 and NAA16. As to expression, highest levels in the kidney and testes. Moderate expression in the liver, thymus and skin.

Functionally, auxillary subunit of the N-terminal acetyltransferase A (NatA) complex which displays alpha (N-terminal) acetyltransferase activity. The sequence is that of N-alpha-acetyltransferase 16, NatA auxiliary subunit (Naa16) from Mus musculus (Mouse).